A 461-amino-acid polypeptide reads, in one-letter code: GTPase Der (461 aa).

2 EngA-type G domains span residues 2–166 (IKVA…PKKP) and 199–370 (IKVA…KNYS). GTP contacts are provided by residues 8 to 15 (GKPNVGKS), 57 to 61 (DTGGL), 118 to 121 (NKID), 205 to 212 (GRVNVGKS), 252 to 256 (DTAGI), and 316 to 319 (NKWD). One can recognise a KH-like domain in the interval 371 to 455 (KRIPTATLNK…PIIFVARKKG (85 aa)).

This sequence belongs to the TRAFAC class TrmE-Era-EngA-EngB-Septin-like GTPase superfamily. EngA (Der) GTPase family. As to quaternary structure, associates with the 50S ribosomal subunit.

Functionally, GTPase that plays an essential role in the late steps of ribosome biogenesis. The protein is GTPase Der of Nautilia profundicola (strain ATCC BAA-1463 / DSM 18972 / AmH).